Here is a 231-residue protein sequence, read N- to C-terminus: Cytochrome c oxidase subunit 2 (231 aa).

The Mitochondrial intermembrane portion of the chain corresponds to 1 to 14 (MAHPSQLGLQDAAS). The helical transmembrane segment at 15–45 (PVMEELLHFHDHALMIVFLISTLVFYIILAM) threads the bilayer. Over 46 to 59 (MTTKMTDKYILDAQ) the chain is Mitochondrial matrix. A helical membrane pass occupies residues 60-87 (EIEIVWTLLPAIVLILVALPSLRILYLI). Over 88–231 (DEVENPHLTI…WSSSMLEEAX (144 aa)) the chain is Mitochondrial intermembrane. Residues H161, C196, E198, C200, H204, and M207 each coordinate Cu cation. E198 is a binding site for Mg(2+).

Belongs to the cytochrome c oxidase subunit 2 family. Component of the cytochrome c oxidase (complex IV, CIV), a multisubunit enzyme composed of 14 subunits. The complex is composed of a catalytic core of 3 subunits MT-CO1, MT-CO2 and MT-CO3, encoded in the mitochondrial DNA, and 11 supernumerary subunits COX4I, COX5A, COX5B, COX6A, COX6B, COX6C, COX7A, COX7B, COX7C, COX8 and NDUFA4, which are encoded in the nuclear genome. The complex exists as a monomer or a dimer and forms supercomplexes (SCs) in the inner mitochondrial membrane with NADH-ubiquinone oxidoreductase (complex I, CI) and ubiquinol-cytochrome c oxidoreductase (cytochrome b-c1 complex, complex III, CIII), resulting in different assemblies (supercomplex SCI(1)III(2)IV(1) and megacomplex MCI(2)III(2)IV(2)). Found in a complex with TMEM177, COA6, COX18, COX20, SCO1 and SCO2. Interacts with TMEM177 in a COX20-dependent manner. Interacts with COX20. Interacts with COX16. Cu cation serves as cofactor.

It is found in the mitochondrion inner membrane. It catalyses the reaction 4 Fe(II)-[cytochrome c] + O2 + 8 H(+)(in) = 4 Fe(III)-[cytochrome c] + 2 H2O + 4 H(+)(out). Functionally, component of the cytochrome c oxidase, the last enzyme in the mitochondrial electron transport chain which drives oxidative phosphorylation. The respiratory chain contains 3 multisubunit complexes succinate dehydrogenase (complex II, CII), ubiquinol-cytochrome c oxidoreductase (cytochrome b-c1 complex, complex III, CIII) and cytochrome c oxidase (complex IV, CIV), that cooperate to transfer electrons derived from NADH and succinate to molecular oxygen, creating an electrochemical gradient over the inner membrane that drives transmembrane transport and the ATP synthase. Cytochrome c oxidase is the component of the respiratory chain that catalyzes the reduction of oxygen to water. Electrons originating from reduced cytochrome c in the intermembrane space (IMS) are transferred via the dinuclear copper A center (CU(A)) of subunit 2 and heme A of subunit 1 to the active site in subunit 1, a binuclear center (BNC) formed by heme A3 and copper B (CU(B)). The BNC reduces molecular oxygen to 2 water molecules using 4 electrons from cytochrome c in the IMS and 4 protons from the mitochondrial matrix. In Latimeria chalumnae (Coelacanth), this protein is Cytochrome c oxidase subunit 2 (MT-CO2).